Consider the following 552-residue polypeptide: Glutamine--tRNA ligase (552 aa).

The 'HIGH' region signature appears at 34–44 (PEPNGYLHIGH). ATP-binding positions include 35-37 (EPN) and 41-47 (HIGHAKS). The L-glutamine site is built by D67 and Y212. ATP is bound by residues T231, 261-262 (RL), and 269-271 (MSK). The 'KMSKS' region motif lies at 268-272 (IMSKR).

This sequence belongs to the class-I aminoacyl-tRNA synthetase family. As to quaternary structure, monomer.

Its subcellular location is the cytoplasm. The catalysed reaction is tRNA(Gln) + L-glutamine + ATP = L-glutaminyl-tRNA(Gln) + AMP + diphosphate. This Pectobacterium atrosepticum (strain SCRI 1043 / ATCC BAA-672) (Erwinia carotovora subsp. atroseptica) protein is Glutamine--tRNA ligase.